Consider the following 880-residue polypeptide: DNA-directed RNA polymerase subunit Rpo1N (880 aa).

8 residues coordinate Zn(2+): Cys-58, Cys-61, Cys-68, His-71, Cys-98, Cys-101, Cys-146, and Cys-149. The Mg(2+) site is built by Asp-456, Asp-458, and Asp-460. Residues Arg-573, Cys-575, Cys-580, His-582, and Ser-584 each contribute to the Zn(2+) site.

The protein belongs to the RNA polymerase beta' chain family. Part of the 13-subunit RNA polymerase complex. Interacts with TFS4. As to quaternary structure, (Microbial infection) Binds viral protein RIP, which blocks global transcription. Requires Mg(2+) as cofactor. Zn(2+) serves as cofactor.

Its subcellular location is the cytoplasm. The catalysed reaction is RNA(n) + a ribonucleoside 5'-triphosphate = RNA(n+1) + diphosphate. (Microbial infection) Binds to viral protein RIP (AC Q3V4R7), which inhibits global transcription. Functionally, DNA-dependent RNA polymerase (RNAP) catalyzes the transcription of DNA into RNA using the four ribonucleoside triphosphates as substrates. Forms the clamp head domain. The sequence is that of DNA-directed RNA polymerase subunit Rpo1N from Sulfolobus acidocaldarius (strain ATCC 33909 / DSM 639 / JCM 8929 / NBRC 15157 / NCIMB 11770).